A 447-amino-acid chain; its full sequence is ATP-dependent protease ATPase subunit HslU (447 aa).

ATP contacts are provided by residues I18, G60–E65, D259, E325, and R397.

Belongs to the ClpX chaperone family. HslU subfamily. As to quaternary structure, a double ring-shaped homohexamer of HslV is capped on each side by a ring-shaped HslU homohexamer. The assembly of the HslU/HslV complex is dependent on binding of ATP.

The protein resides in the cytoplasm. Functionally, ATPase subunit of a proteasome-like degradation complex; this subunit has chaperone activity. The binding of ATP and its subsequent hydrolysis by HslU are essential for unfolding of protein substrates subsequently hydrolyzed by HslV. HslU recognizes the N-terminal part of its protein substrates and unfolds these before they are guided to HslV for hydrolysis. This is ATP-dependent protease ATPase subunit HslU from Burkholderia pseudomallei (strain 668).